A 1009-amino-acid polypeptide reads, in one-letter code: Dihydropyrimidine dehydrogenase [NADP(+)] (1009 aa).

Positions 69–99 constitute a 4Fe-4S ferredoxin-type 1 domain; that stretch reads RGALFESARCLKCADAPCQKGCPTQLDIKSF. [4Fe-4S] cluster contacts are provided by cysteine 78, cysteine 81, cysteine 86, and cysteine 90. Valine 128 provides a ligand contact to FAD. Residues cysteine 129, cysteine 135, cysteine 139, and glutamine 155 each contribute to the [4Fe-4S] cluster site. Residues 193-197, 217-225, arginine 234, and leucine 260 contribute to the FAD site; these read GCGPT and EKEQYLGGL. NADP(+)-binding positions include 339 to 342, 363 to 364, arginine 370, 436 to 438, and 479 to 484; these read AGDT, RR, AFG, and DLVGNG. 478–486 contacts FAD; sequence GDLVGNGTT. FMN is bound by residues serine 548 and 572–573; that span reads KT. Residues asparagine 607 and 666 to 668 contribute to the substrate site; that span reads NLS. Cysteine 669 serves as the catalytic Proton acceptor. Lysine 707 provides a ligand contact to FMN. Position 734-735 (734-735) interacts with substrate; sequence NT. FMN is bound by residues glycine 765, 791–793, and 814–815; these read TGG and CS. 2 consecutive 4Fe-4S ferredoxin-type domains span residues 932–964 and 965–995; these read VVAL…FDGK and THIP…MVPR. Residues cysteine 941, cysteine 944, cysteine 947, cysteine 951, cysteine 974, cysteine 977, cysteine 980, and cysteine 984 each contribute to the [4Fe-4S] cluster site.

This sequence belongs to the dihydropyrimidine dehydrogenase family. Homodimer. Requires [4Fe-4S] cluster as cofactor. FAD is required as a cofactor. It depends on FMN as a cofactor.

Its subcellular location is the cytoplasm. It carries out the reaction 5,6-dihydrouracil + NADP(+) = uracil + NADPH + H(+). It participates in amino-acid biosynthesis; beta-alanine biosynthesis. Its function is as follows. Involved in pyrimidine base degradation. Catalyzes the reduction of uracil and thymine. This Dictyostelium discoideum (Social amoeba) protein is Dihydropyrimidine dehydrogenase [NADP(+)] (pyd1).